The primary structure comprises 191 residues: Orotate phosphoribosyltransferase (191 aa).

5-phospho-alpha-D-ribose 1-diphosphate is bound at residue 114-122; it reads EDVITTGGS. Orotate is bound by residues T118 and R146.

Belongs to the purine/pyrimidine phosphoribosyltransferase family. PyrE subfamily. As to quaternary structure, homodimer. Mg(2+) serves as cofactor.

The catalysed reaction is orotidine 5'-phosphate + diphosphate = orotate + 5-phospho-alpha-D-ribose 1-diphosphate. It functions in the pathway pyrimidine metabolism; UMP biosynthesis via de novo pathway; UMP from orotate: step 1/2. Catalyzes the transfer of a ribosyl phosphate group from 5-phosphoribose 1-diphosphate to orotate, leading to the formation of orotidine monophosphate (OMP). The protein is Orotate phosphoribosyltransferase of Caldicellulosiruptor saccharolyticus (strain ATCC 43494 / DSM 8903 / Tp8T 6331).